Reading from the N-terminus, the 432-residue chain is Adenylosuccinate synthetase (432 aa).

GTP-binding positions include 13 to 19 and 41 to 43; these read GDEGKGK and GHT. The active-site Proton acceptor is the aspartate 14. Mg(2+) is bound by residues aspartate 14 and glycine 41. IMP is bound by residues 14-17, 39-42, threonine 130, arginine 144, glutamine 225, threonine 240, and arginine 306; these read DEGK and NAGH. Histidine 42 functions as the Proton donor in the catalytic mechanism. 302–308 contributes to the substrate binding site; the sequence is TVTGRAR. GTP-binding positions include arginine 308, 334–336, and 416–418; these read KLD and STG.

It belongs to the adenylosuccinate synthetase family. As to quaternary structure, homodimer. It depends on Mg(2+) as a cofactor.

It localises to the cytoplasm. The catalysed reaction is IMP + L-aspartate + GTP = N(6)-(1,2-dicarboxyethyl)-AMP + GDP + phosphate + 2 H(+). Its pathway is purine metabolism; AMP biosynthesis via de novo pathway; AMP from IMP: step 1/2. In terms of biological role, plays an important role in the de novo pathway of purine nucleotide biosynthesis. Catalyzes the first committed step in the biosynthesis of AMP from IMP. In Herminiimonas arsenicoxydans, this protein is Adenylosuccinate synthetase.